The primary structure comprises 238 residues: Polynucleotide 3'-phosphatase (238 aa).

Belongs to the DNA 3' phosphatase family.

The protein localises to the nucleus. The catalysed reaction is a 3'end (2'-deoxyribonucleotide 3'-phosphate)-DNA + H2O = a 3'-end 2'-deoxyribonucleotide-DNA + phosphate. Its function is as follows. Dephosphorylate DNA's 3'-phosphate termini. Has a role in the repair of breaks in single-stranded DNA. This is Polynucleotide 3'-phosphatase (TPP1) from Saccharomyces cerevisiae (strain ATCC 204508 / S288c) (Baker's yeast).